We begin with the raw amino-acid sequence, 596 residues long: Protein NRT1/ PTR FAMILY 3.1 (596 aa).

Basic and acidic residues predominate over residues 1–16 (MEEQSKNKISEEEKQL). The segment at 1-23 (MEEQSKNKISEEEKQLHGRPNRP) is disordered. 12 helical membrane-spanning segments follow: residues 27–47 (LITM…VVGF), 73–93 (FAGT…SFAG), 98–118 (ITFA…SAII), 137–157 (TAQL…SGGI), 185–205 (NWYY…LVWI), 213–233 (LGLG…VGGF), 334–354 (MGPI…QGTF), 372–392 (IPAG…IIFY), 416–436 (MGIG…VEVK), 453–473 (IVPI…VAEA), 497–517 (ALFW…VTLV), and 542–562 (YFYW…LWCA).

The protein belongs to the major facilitator superfamily. Proton-dependent oligopeptide transporter (POT/PTR) (TC 2.A.17) family. In terms of tissue distribution, expressed in shoots, stems, leaves, flowers and siliques.

The protein localises to the membrane. Functionally, may act as an efflux-type nitrite transporter. Not regulated by the PII protein involved in the regulation of nitrite uptake into higher plant chloroplasts. This chain is Protein NRT1/ PTR FAMILY 3.1 (NPF3.1), found in Arabidopsis thaliana (Mouse-ear cress).